The following is a 465-amino-acid chain: Ribulose bisphosphate carboxylase large chain (465 aa).

N6,N6,N6-trimethyllysine is present on lysine 4. Residues asparagine 113 and threonine 163 each coordinate substrate. Residue lysine 165 is the Proton acceptor of the active site. A substrate-binding site is contributed by lysine 167. Lysine 191, aspartate 193, and glutamate 194 together coordinate Mg(2+). Residue lysine 191 is modified to N6-carboxylysine. Residue histidine 284 is the Proton acceptor of the active site. Substrate is bound by residues arginine 285, histidine 317, and serine 369.

It belongs to the RuBisCO large chain family. Type I subfamily. Heterohexadecamer of 8 large chains and 8 small chains; disulfide-linked. The disulfide link is formed within the large subunit homodimers. Mg(2+) serves as cofactor. Post-translationally, the disulfide bond which can form in the large chain dimeric partners within the hexadecamer appears to be associated with oxidative stress and protein turnover.

The protein localises to the plastid. The protein resides in the chloroplast. It catalyses the reaction 2 (2R)-3-phosphoglycerate + 2 H(+) = D-ribulose 1,5-bisphosphate + CO2 + H2O. It carries out the reaction D-ribulose 1,5-bisphosphate + O2 = 2-phosphoglycolate + (2R)-3-phosphoglycerate + 2 H(+). RuBisCO catalyzes two reactions: the carboxylation of D-ribulose 1,5-bisphosphate, the primary event in carbon dioxide fixation, as well as the oxidative fragmentation of the pentose substrate in the photorespiration process. Both reactions occur simultaneously and in competition at the same active site. This Casuarina equisetifolia (Beach she-oak) protein is Ribulose bisphosphate carboxylase large chain.